We begin with the raw amino-acid sequence, 394 residues long: Protein TsgA homolog (394 aa).

12 helical membrane passes run W11–M31, F51–P71, L76–L96, L101–I121, L134–M154, W162–F182, I206–I226, F251–L271, I274–N294, I302–L322, F334–V354, and L363–V383.

Belongs to the major facilitator superfamily. TsgA family.

The protein localises to the cell inner membrane. This chain is Protein TsgA homolog, found in Serratia proteamaculans (strain 568).